The chain runs to 326 residues: AA10 family lytic polysaccharide monooxygenase C (326 aa).

Residues 1–32 form the signal peptide; sequence MVFSNSNASVSLFRLVALVATLSHLVFTFVDA. Residues histidine 33 and histidine 118 each coordinate Cu(2+). One can recognise a Chitin-binding type-4 domain in the interval 33 to 200; it reads HGYVTFPASR…ANAFYQCLDL (168 aa). Cysteine 81 and cysteine 197 are oxidised to a cystine. Residues asparagine 206, asparagine 215, asparagine 266, and asparagine 303 are each glycosylated (N-linked (GlcNAc...) asparagine). Residues 206 to 326 form a disordered region; the sequence is NSSSSSSSSN…KSQMRRDRQG (121 aa). Low complexity predominate over residues 207-281; it reads SSSSSSSSNS…NNGGSSGSTT (75 aa).

It belongs to the polysaccharide monooxygenase AA10 family. Cu(2+) is required as a cofactor.

The protein resides in the secreted. Its function is as follows. Lytic polysaccharide monooxygenase (LPMO) that oxidatively cleaves alpha- and beta-chitin with C1 regioselectivity. Catalysis by LPMOs requires the reduction of the active-site copper from Cu(II) to Cu(I) by a reducing agent and H(2)O(2) or O(2) as a cosubstrate. Exhibits enzymatic activity on U.maydis fungal cell wall chitin and Boosts chitin hydrolysis by chitinase GH18A. This chain is AA10 family lytic polysaccharide monooxygenase C, found in Mycosarcoma maydis (Corn smut fungus).